We begin with the raw amino-acid sequence, 457 residues long: ATP-dependent protease ATPase subunit HslU (457 aa).

ATP is bound by residues valine 21, 63–68 (GVGKTE), aspartate 269, glutamate 335, and arginine 407.

It belongs to the ClpX chaperone family. HslU subfamily. In terms of assembly, a double ring-shaped homohexamer of HslV is capped on each side by a ring-shaped HslU homohexamer. The assembly of the HslU/HslV complex is dependent on binding of ATP.

It localises to the cytoplasm. ATPase subunit of a proteasome-like degradation complex; this subunit has chaperone activity. The binding of ATP and its subsequent hydrolysis by HslU are essential for unfolding of protein substrates subsequently hydrolyzed by HslV. HslU recognizes the N-terminal part of its protein substrates and unfolds these before they are guided to HslV for hydrolysis. This is ATP-dependent protease ATPase subunit HslU from Desulfotalea psychrophila (strain LSv54 / DSM 12343).